Reading from the N-terminus, the 315-residue chain is ATP synthase gamma chain (315 aa).

Belongs to the ATPase gamma chain family. In terms of assembly, F-type ATPases have 2 components, CF(1) - the catalytic core - and CF(0) - the membrane proton channel. CF(1) has five subunits: alpha(3), beta(3), gamma(1), delta(1), epsilon(1). CF(0) has three main subunits: a, b and c.

It is found in the cellular thylakoid membrane. Its function is as follows. Produces ATP from ADP in the presence of a proton gradient across the membrane. The gamma chain is believed to be important in regulating ATPase activity and the flow of protons through the CF(0) complex. In Synechococcus sp. (strain RCC307), this protein is ATP synthase gamma chain.